The sequence spans 201 residues: Molybdenum cofactor guanylyltransferase (201 aa).

Residues 15–17, lysine 28, aspartate 74, and aspartate 104 each bind GTP; that span reads LAG. Aspartate 104 contacts Mg(2+).

Belongs to the MobA family. Monomer. Mg(2+) serves as cofactor.

Its subcellular location is the cytoplasm. The catalysed reaction is Mo-molybdopterin + GTP + H(+) = Mo-molybdopterin guanine dinucleotide + diphosphate. Its function is as follows. Transfers a GMP moiety from GTP to Mo-molybdopterin (Mo-MPT) cofactor (Moco or molybdenum cofactor) to form Mo-molybdopterin guanine dinucleotide (Mo-MGD) cofactor. The sequence is that of Molybdenum cofactor guanylyltransferase from Pseudomonas syringae pv. syringae (strain B728a).